The sequence spans 548 residues: Chaperonin GroEL (548 aa).

Residues 29–32 (TLGP), K50, 86–90 (DGTTT), G416, and D497 contribute to the ATP site.

It belongs to the chaperonin (HSP60) family. As to quaternary structure, forms a cylinder of 14 subunits composed of two heptameric rings stacked back-to-back. Interacts with the co-chaperonin GroES.

Its subcellular location is the cytoplasm. The catalysed reaction is ATP + H2O + a folded polypeptide = ADP + phosphate + an unfolded polypeptide.. Functionally, together with its co-chaperonin GroES, plays an essential role in assisting protein folding. The GroEL-GroES system forms a nano-cage that allows encapsulation of the non-native substrate proteins and provides a physical environment optimized to promote and accelerate protein folding. The polypeptide is Chaperonin GroEL (Neorickettsia risticii (Ehrlichia risticii)).